The primary structure comprises 190 residues: Crossover junction endodeoxyribonuclease RuvC (190 aa).

Active-site residues include Asp-8, Glu-67, and Asp-139. Mg(2+) contacts are provided by Asp-8, Glu-67, and Asp-139.

Belongs to the RuvC family. As to quaternary structure, homodimer which binds Holliday junction (HJ) DNA. The HJ becomes 2-fold symmetrical on binding to RuvC with unstacked arms; it has a different conformation from HJ DNA in complex with RuvA. In the full resolvosome a probable DNA-RuvA(4)-RuvB(12)-RuvC(2) complex forms which resolves the HJ. Mg(2+) serves as cofactor.

The protein localises to the cytoplasm. It carries out the reaction Endonucleolytic cleavage at a junction such as a reciprocal single-stranded crossover between two homologous DNA duplexes (Holliday junction).. The RuvA-RuvB-RuvC complex processes Holliday junction (HJ) DNA during genetic recombination and DNA repair. Endonuclease that resolves HJ intermediates. Cleaves cruciform DNA by making single-stranded nicks across the HJ at symmetrical positions within the homologous arms, yielding a 5'-phosphate and a 3'-hydroxyl group; requires a central core of homology in the junction. The consensus cleavage sequence is 5'-(A/T)TT(C/G)-3'. Cleavage occurs on the 3'-side of the TT dinucleotide at the point of strand exchange. HJ branch migration catalyzed by RuvA-RuvB allows RuvC to scan DNA until it finds its consensus sequence, where it cleaves and resolves the cruciform DNA. This is Crossover junction endodeoxyribonuclease RuvC from Haemophilus influenzae (strain PittGG).